The chain runs to 142 residues: Large ribosomal subunit protein uL13 (142 aa).

It belongs to the universal ribosomal protein uL13 family. As to quaternary structure, part of the 50S ribosomal subunit.

Functionally, this protein is one of the early assembly proteins of the 50S ribosomal subunit, although it is not seen to bind rRNA by itself. It is important during the early stages of 50S assembly. This chain is Large ribosomal subunit protein uL13, found in Pseudomonas fluorescens (strain Pf0-1).